A 496-amino-acid chain; its full sequence is Steroid 21-hydroxylase (496 aa).

Serine 109 is a heme b binding site. Arginine 232 serves as a coordination point for 17alpha-hydroxyprogesterone. Arginine 232 serves as a coordination point for progesterone. Positions 364, 425, and 427 each coordinate heme b.

It belongs to the cytochrome P450 family. Heme b is required as a cofactor.

It localises to the endoplasmic reticulum membrane. Its subcellular location is the microsome membrane. It catalyses the reaction progesterone + reduced [NADPH--hemoprotein reductase] + O2 = 21-hydroxyprogesterone + oxidized [NADPH--hemoprotein reductase] + H2O + H(+). It carries out the reaction 17alpha-hydroxyprogesterone + reduced [NADPH--hemoprotein reductase] + O2 = 11-deoxycortisol + oxidized [NADPH--hemoprotein reductase] + H2O + H(+). In terms of biological role, a cytochrome P450 monooxygenase that plays a major role in adrenal steroidogenesis. Catalyzes the hydroxylation at C-21 of progesterone and 17alpha-hydroxyprogesterone to respectively form 11-deoxycorticosterone and 11-deoxycortisol, intermediate metabolites in the biosynthetic pathway of mineralocorticoids and glucocorticoids. Mechanistically, uses molecular oxygen inserting one oxygen atom into a substrate, and reducing the second into a water molecule, with two electrons provided by NADPH via cytochrome P450 reductase (CPR; NADPH-ferrihemoprotein reductase). This chain is Steroid 21-hydroxylase (CYP21), found in Bos taurus (Bovine).